Here is a 251-residue protein sequence, read N- to C-terminus: Large ribosomal subunit protein uL3 (251 aa).

Gln-151 carries the N5-methylglutamine modification. The disordered stretch occupies residues 214–251; the sequence is KDAPFPAGLKSAANSNSAPTETPAEEVAAPEATEGQEG. Residues 231–251 show a composition bias toward low complexity; that stretch reads APTETPAEEVAAPEATEGQEG.

The protein belongs to the universal ribosomal protein uL3 family. As to quaternary structure, part of the 50S ribosomal subunit. Forms a cluster with proteins L14 and L19. In terms of processing, methylated by PrmB.

In terms of biological role, one of the primary rRNA binding proteins, it binds directly near the 3'-end of the 23S rRNA, where it nucleates assembly of the 50S subunit. This is Large ribosomal subunit protein uL3 from Rhizorhabdus wittichii (strain DSM 6014 / CCUG 31198 / JCM 15750 / NBRC 105917 / EY 4224 / RW1) (Sphingomonas wittichii).